A 414-amino-acid polypeptide reads, in one-letter code: Na(+)/H(+) antiporter NhaA (414 aa).

11 helical membrane-spanning segments follow: residues Val22–Phe42, Leu61–Val81, Met101–Phe121, Gly131–Gly151, Leu171–Ile191, Ser215–Val235, Gly239–Ala259, Val281–Val301, Leu308–Val328, Trp343–Ile363, and Lys379–Val399.

This sequence belongs to the NhaA Na(+)/H(+) (TC 2.A.33) antiporter family.

It localises to the cell membrane. The catalysed reaction is Na(+)(in) + 2 H(+)(out) = Na(+)(out) + 2 H(+)(in). In terms of biological role, na(+)/H(+) antiporter that extrudes sodium in exchange for external protons. The sequence is that of Na(+)/H(+) antiporter NhaA from Thermobifida fusca (strain YX).